We begin with the raw amino-acid sequence, 304 residues long: MPINVPSGLPAVKILAKEGIFVMTEKRAIHQDIRPLEILILNLMPDKIKTEIQLLRLLGNTPLQVNVTLLYTESHTPKHTPIEHILRFYTTFSAVKDRKFDGFIITGAPVELLPFEEVDYWDELTEIMEWSRHNVYSTMFICWAAQAGLYYFYGVPKYELPQKLSGVYRHRVTKETVLFRGHDDFFWAPHSRYTEVRKEDIEKIPELEILAESDEAGVYVVANKSERQIFVTGHPEYDRYTLRDEYYRDINRNLKVPIPANYFPDNDPTKTPVLTWWSHAHLFFSNWLNYCIYQKTPYKLEDIH.

The active-site Acyl-thioester intermediate is Cys142. 2 residues coordinate substrate: Lys163 and Ser191. Residue His234 is the Proton acceptor of the active site. Glu236 is a catalytic residue. Arg248 contributes to the substrate binding site.

This sequence belongs to the MetA family.

The protein resides in the cytoplasm. The enzyme catalyses L-homoserine + acetyl-CoA = O-acetyl-L-homoserine + CoA. It functions in the pathway amino-acid biosynthesis; L-methionine biosynthesis via de novo pathway; O-acetyl-L-homoserine from L-homoserine: step 1/1. Transfers an acetyl group from acetyl-CoA to L-homoserine, forming acetyl-L-homoserine. The protein is Homoserine O-acetyltransferase of Thermotoga neapolitana (strain ATCC 49049 / DSM 4359 / NBRC 107923 / NS-E).